The primary structure comprises 646 residues: Alkyl/aryl-sulfatase BDS1 (646 aa).

An N-acetylmethionine modification is found at Met1. 7 residues coordinate Zn(2+): His162, His164, Asp166, His167, Glu273, Glu292, and His337.

Belongs to the metallo-beta-lactamase superfamily. Type III sulfatase family. Zn(2+) serves as cofactor.

In terms of biological role, alkyl/aryl-sulfatase. Enables the use of SDS and 4-nitrocatechol as sulfur source. The sequence is that of Alkyl/aryl-sulfatase BDS1 (BDS1) from Saccharomyces cerevisiae (strain ATCC 204508 / S288c) (Baker's yeast).